Here is a 374-residue protein sequence, read N- to C-terminus: MQVIVALAALGSLAAPALGFSIPRGVPVSQSMIDVKLSSTGNSMVKATITNNGNRALNLLKFHTIMDSNPTRKVSIESEDGKEIQFTGMMPTYKEKDLKPSYFIFLPPKGTVEHSFDIARTHDLSRGGKFTLKAEGMVPIAEENGTEITGAAKYHSNELHMTIDGEKAASVENAFGIVKRGPLTRINKRTSIDMQSCGNNQELQALTAALKASAQLSSMSAQAVSQNQDKYMEYFKDPQYMQTVQSRFQAVAQESSSTTGGGTTYHCSDTMGGCEEGVLAYTLPSQNEVFNCPIYYSDLPPLSNECHAQDQATTTLHELTHNPAVQEPFCEDNGYGYERATALSAEKAVQNADSYALFANGKLNLITLMLIDPD.

A signal peptide spans M1–G19. The propeptide occupies F20 to R189. 2 disulfides stabilise this stretch: C197–C267 and C274–C292. Position 317 (H317) interacts with Zn(2+). E318 is a catalytic residue. H321 and D332 together coordinate Zn(2+).

Belongs to the peptidase M35 family. It depends on Zn(2+) as a cofactor.

The protein resides in the secreted. It carries out the reaction Preferential cleavage of bonds with hydrophobic residues in P1'. Also 3-Asn-|-Gln-4 and 8-Gly-|-Ser-9 bonds in insulin B chain.. Its function is as follows. Probable secreted metalloprotease that shows high activities on basic nuclear substrates such as histone and protamine. May be involved in virulence. The sequence is that of Probable neutral protease 2 homolog TRV_05367 from Trichophyton verrucosum (strain HKI 0517).